The following is a 238-amino-acid chain: Ribonuclease PH (238 aa).

Phosphate is bound by residues Arg86 and 124 to 126; that span reads GTR.

This sequence belongs to the RNase PH family. Homohexameric ring arranged as a trimer of dimers.

The catalysed reaction is tRNA(n+1) + phosphate = tRNA(n) + a ribonucleoside 5'-diphosphate. Its function is as follows. Phosphorolytic 3'-5' exoribonuclease that plays an important role in tRNA 3'-end maturation. Removes nucleotide residues following the 3'-CCA terminus of tRNAs; can also add nucleotides to the ends of RNA molecules by using nucleoside diphosphates as substrates, but this may not be physiologically important. Probably plays a role in initiation of 16S rRNA degradation (leading to ribosome degradation) during starvation. The polypeptide is Ribonuclease PH (Vibrio atlanticus (strain LGP32) (Vibrio splendidus (strain Mel32))).